Consider the following 535-residue polypeptide: Alpha-1,3-mannosyl-glycoprotein 4-beta-N-acetylglucosaminyltransferase A (535 aa).

The Cytoplasmic segment spans residues 1 to 6 (MRLRNG). A helical; Signal-anchor for type II membrane protein transmembrane segment spans residues 7-27 (TVATVLVFITTFLSLSWYTAW). A coiled-coil region spans residues 28-54 (QNGKEKLIAYQREFHALKERLRIAEHR). At 28 to 535 (QNGKEKLIAY…NEIHIKKMTN (508 aa)) the chain is on the lumenal side. 3 N-linked (GlcNAc...) asparagine glycosylation sites follow: Asn-77, Asn-85, and Asn-458.

The protein belongs to the glycosyltransferase 54 family. A divalent metal cation serves as cofactor. In terms of processing, N-glycosylated.

The protein localises to the golgi apparatus membrane. It localises to the secreted. It catalyses the reaction N(4)-{beta-D-GlcNAc-(1-&gt;2)-alpha-D-Man-(1-&gt;3)-[beta-D-GlcNAc-(1-&gt;2)-alpha-D-Man-(1-&gt;6)]-beta-D-Man-(1-&gt;4)-beta-D-GlcNAc-(1-&gt;4)-beta-D-GlcNAc}-L-asparaginyl-[protein] + UDP-N-acetyl-alpha-D-glucosamine = N(4)-{beta-D-GlcNAc-(1-&gt;2)-[beta-D-GlcNAc-(1-&gt;4)]-alpha-D-Man-(1-&gt;3)-[beta-D-GlcNAc-(1-&gt;2)-alpha-D-Man-(1-&gt;6)]-beta-D-Man-(1-&gt;4)-beta-D-GlcNAc-(1-&gt;4)-beta-D-GlcNAc}-L-asparaginyl-[protein] + UDP + H(+). The enzyme catalyses an N(4)-{beta-D-GlcNAc-(1-&gt;2)-alpha-D-Man-(1-&gt;3)-[alpha-D-Man-(1-&gt;6)]-beta-D-Man-(1-&gt;4)-beta-D-GlcNAc-(1-&gt;4)-beta-D-GlcNAc}-L-asparaginyl-[protein] + UDP-N-acetyl-alpha-D-glucosamine = an N(4)-{beta-D-GlcNAc-(1-&gt;2)-[beta-D-GlcNAc-(1-&gt;4)]-alpha-D-Man-(1-&gt;3)-[alpha-D-Man-(1-&gt;6)]-beta-D-Man-(1-&gt;4)-beta-D-GlcNAc-(1-&gt;4)-beta-D-GlcNAc}-L-asparaginyl-[protein] + UDP + H(+). It carries out the reaction an N(4)-{beta-D-GlcNAc-(1-&gt;2)-alpha-D-Man-(1-&gt;3)-[beta-D-GlcNAc-(1-&gt;2)-[beta-D-GlcNAc-(1-&gt;6)]-alpha-D-Man-(1-&gt;6)]-beta-D-Man-(1-&gt;4)-beta-D-GlcNAc-(1-&gt;4)-beta-D-GlcNAc}-L-asparaginyl-[protein] + UDP-N-acetyl-alpha-D-glucosamine = an N(4)-{beta-D-GlcNAc-(1-&gt;2)-[beta-D-GlcNAc-(1-&gt;4)]-alpha-D-Man-(1-&gt;3)-[beta-D-GlcNAc-(1-&gt;2)-[beta-D-GlcNAc-(1-&gt;6)]-alpha-D-Man-(1-&gt;6)]-beta-D-Man-(1-&gt;4)-beta-D-GlcNAc-(1-&gt;4)-beta-D-GlcNAc}-L-asparaginyl-[protein] + UDP + H(+). The catalysed reaction is an N(4)-{beta-D-GlcNAc-(1-&gt;2)-alpha-D-Man-(1-&gt;3)-[beta-D-GlcNAc-(1-&gt;2)-alpha-D-Man-(1-&gt;6)]-beta-D-Man-(1-&gt;4)-beta-D-GlcNAc-(1-&gt;4)-[alpha-L-Fuc-(1-&gt;6)]-beta-D-GlcNAc}-L-asparaginyl-[protein] + UDP-N-acetyl-alpha-D-glucosamine = N(4)-{beta-D-GlcNAc-(1-&gt;2)-[beta-D-GlcNAc-(1-&gt;4)]-alpha-D-Man-(1-&gt;3)-[beta-D-GlcNAc-(1-&gt;2)-alpha-D-Man-(1-&gt;6)]-beta-D-Man-(1-&gt;4)-beta-D-GlcNAc-(1-&gt;4)-[alpha-L-Fuc-(1-&gt;6)]-beta-D-GlcNAc}-asparaginyl-[protein] + UDP + H(+). It catalyses the reaction an N(4)-{beta-D-GlcNAc-(1-&gt;2)-alpha-D-Man-(1-&gt;3)-[beta-D-Gal-(1-&gt;4)-beta-D-GlcNAc-(1-&gt;2)-alpha-D-Man-(1-&gt;6)]-beta-D-Man-(1-&gt;4)-beta-D-GlcNAc-(1-&gt;4)-beta-D-GlcNAc}-L-asparaginyl-[protein] + UDP-N-acetyl-alpha-D-glucosamine = an N(4)-{beta-D-GlcNAc-(1-&gt;2)-[beta-D-GlcNAc-(1-&gt;4)]-alpha-D-Man-(1-&gt;3)-[beta-D-Gal-(1-&gt;4)-beta-D-GlcNAc-(1-&gt;2)-alpha-D-Man-(1-&gt;6)]-beta-D-Man-(1-&gt;4)-beta-D-GlcNAc-(1-&gt;4)-beta-D-GlcNAc}-L-asparaginyl-[protein] + UDP + H(+). The enzyme catalyses N(4)-{beta-D-GlcNAc-(1-&gt;2)-alpha-D-Man-(1-&gt;3)-[alpha-D-Man-(1-&gt;3)-{alpha-D-Man-(1-&gt;6)}-alpha-D-Man-(1-&gt;6)]-beta-D-Man-(1-&gt;4)-beta-D-GlcNAc-(1-&gt;4)-beta-D-GlcNAc}-asparaginyl-[protein] + UDP-N-acetyl-alpha-D-glucosamine = N(4)-{beta-D-GlcNAc-(1-&gt;2)-[beta-D-GlcNAc-(1-&gt;4)]-alpha-D-Man-(1-&gt;3)-[alpha-D-Man-(1-&gt;3)-{alpha-D-Man-(1-&gt;6)}-alpha-D-Man-(1-&gt;6)]-beta-D-Man-(1-&gt;4)-beta-D-GlcNAc-(1-&gt;4)-beta-D-GlcNAc}-asparaginyl-[protein] + UDP + H(+). It carries out the reaction N(4)-{beta-D-GlcNAc-(1-&gt;2)-alpha-D-Man-(1-&gt;3)-beta-D-Man-(1-&gt;4)-beta-D-GlcNAc-(1-&gt;4)-beta-D-GlcNAc}-asparaginyl-[protein] + UDP-N-acetyl-alpha-D-glucosamine = N(4)-{beta-D-GlcNAc-(1-&gt;2)-[beta-D-GlcNAc-(1-&gt;4)]-alpha-D-Man-(1-&gt;3)-beta-D-Man-(1-&gt;4)-beta-D-GlcNAc-(1-&gt;4)-beta-D-GlcNAc}-asparaginyl-[protein] + UDP + H(+). The protein operates within protein modification; protein glycosylation. Its activity is regulated as follows. Inhibited by UDP. Its function is as follows. Glycosyltransferase that catalyze the transfer of GlcNAc from UDP-GlcNAc to the GlcNAcbeta1-2Manalpha1-3 arm of the core structure of N-linked glycans through a beta1-4 linkage and participates in the production of tri- and tetra-antennary N-linked sugar chains. Involved in glucose transport by mediating SLC2A2/GLUT2 glycosylation, thereby controlling cell-surface expression of SLC2A2 in pancreatic beta cells. The chain is Alpha-1,3-mannosyl-glycoprotein 4-beta-N-acetylglucosaminyltransferase A from Gallus gallus (Chicken).